A 353-amino-acid chain; its full sequence is Peroxidase 34 (353 aa).

Positions 1 to 30 (MHFSSSSTSSTWTILITLGCLMLHASLSAA) are cleaved as a signal peptide. Position 31 is a pyrrolidone carboxylic acid (Gln31). Disulfide bonds link Cys41–Cys121, Cys74–Cys79, Cys127–Cys331, and Cys207–Cys239. The N-linked (GlcNAc...) asparagine glycan is linked to Asn43. His72 serves as the catalytic Proton acceptor. Positions 73, 76, 78, 80, and 82 each coordinate Ca(2+). The N-linked (GlcNAc...) asparagine glycan is linked to Asn87. Substrate is bound at residue Pro169. His200 provides a ligand contact to heme b. Thr201 provides a ligand contact to Ca(2+). Residues Asn216, Asn228, and Asn244 are each glycosylated (N-linked (GlcNAc...) asparagine). Residues Asp252, Thr255, and Asp260 each contribute to the Ca(2+) site. Asn285 carries an N-linked (GlcNAc...) asparagine glycan.

Belongs to the peroxidase family. Classical plant (class III) peroxidase subfamily. Requires heme b as cofactor. The cofactor is Ca(2+). Preferentially expressed in roots, but also detected in flowers, leaves and stems.

It is found in the secreted. Its subcellular location is the vacuole. The catalysed reaction is 2 a phenolic donor + H2O2 = 2 a phenolic radical donor + 2 H2O. Its function is as follows. Removal of H(2)O(2), oxidation of toxic reductants, biosynthesis and degradation of lignin, suberization, auxin catabolism, response to environmental stresses such as wounding, pathogen attack and oxidative stress. These functions might be dependent on each isozyme/isoform in each plant tissue. May be implicated in the systemic acquired resistance response via the salicylic acid signal transduction pathway. Exhibits a Ca(2+)-pectate binding affinity which could be interpreted in vivo as a specificity to interact with the pectic structure of the cell wall. In Arabidopsis thaliana (Mouse-ear cress), this protein is Peroxidase 34 (PER34).